We begin with the raw amino-acid sequence, 148 residues long: MKVLILLGLVLLSVMVQGKVFERCELARTLKRLGLDGYRGISLANWMCLAKWESDYNTRATNYNPGDQSTDYGIFQINSHYWCNNGRTPGAVNACHISCNALLQDDITEAVACAKRVVRDPQGIRAWVAWKAHCQNRDVSQYIQGCGV.

An N-terminal signal peptide occupies residues 1-18 (MKVLILLGLVLLSVMVQG). Positions 19–148 (KVFERCELAR…VSQYIQGCGV (130 aa)) constitute a C-type lysozyme domain. 4 disulfide bridges follow: C24–C146, C48–C134, C83–C99, and C95–C113. Catalysis depends on residues E53 and D71.

Belongs to the glycosyl hydrolase 22 family. In terms of assembly, monomer.

Its subcellular location is the secreted. The catalysed reaction is Hydrolysis of (1-&gt;4)-beta-linkages between N-acetylmuramic acid and N-acetyl-D-glucosamine residues in a peptidoglycan and between N-acetyl-D-glucosamine residues in chitodextrins.. Lysozymes have primarily a bacteriolytic function; those in tissues and body fluids are associated with the monocyte-macrophage system and enhance the activity of immunoagents. The protein is Lysozyme C (LYZ) of Saguinus oedipus (Cotton-top tamarin).